The following is a 667-amino-acid chain: Fermitin family homolog 3 (667 aa).

Residue serine 8 is modified to Phosphoserine. Phosphotyrosine is present on tyrosine 11. The 330-residue stretch at tryptophan 229–valine 558 folds into the FERM domain. The 104-residue stretch at aspartate 354 to lysine 457 folds into the PH domain. Position 504 is a phosphotyrosine (tyrosine 504). Threonine 591 bears the Phosphothreonine mark.

It belongs to the kindlin family. In terms of assembly, interacts with ITGB1, ITGB2 and ITGB3 (via cytoplasmic tails). In terms of tissue distribution, highly expressed in lymph node. Expressed in thymus, spleen and leukocytes. Weakly expressed in placenta, small intestine, stomach, testis and lung. Overexpressed in B-cell malignancies.

It localises to the cell projection. The protein resides in the podosome. Functionally, plays a central role in cell adhesion in hematopoietic cells. Acts by activating the integrin beta-1-3 (ITGB1, ITGB2 and ITGB3). Required for integrin-mediated platelet adhesion and leukocyte adhesion to endothelial cells. Required for activation of integrin beta-2 (ITGB2) in polymorphonuclear granulocytes (PMNs). In terms of biological role, isoform 2 may act as a repressor of NF-kappa-B and apoptosis. This Homo sapiens (Human) protein is Fermitin family homolog 3 (FERMT3).